Consider the following 165-residue polypeptide: Lipoprotein signal peptidase (165 aa).

4 helical membrane passes run 7 to 27 (YFSS…LVLL), 46 to 66 (AVTS…FSFL), 72 to 92 (WQRY…IYLL), and 100 to 120 (LFCW…IDRV). Active-site residues include D127 and D145. A helical transmembrane segment spans residues 136-156 (WHWPAFNIADSAICIGAVLFI).

Belongs to the peptidase A8 family.

Its subcellular location is the cell inner membrane. It catalyses the reaction Release of signal peptides from bacterial membrane prolipoproteins. Hydrolyzes -Xaa-Yaa-Zaa-|-(S,diacylglyceryl)Cys-, in which Xaa is hydrophobic (preferably Leu), and Yaa (Ala or Ser) and Zaa (Gly or Ala) have small, neutral side chains.. The protein operates within protein modification; lipoprotein biosynthesis (signal peptide cleavage). Functionally, this protein specifically catalyzes the removal of signal peptides from prolipoproteins. This chain is Lipoprotein signal peptidase, found in Janthinobacterium sp. (strain Marseille) (Minibacterium massiliensis).